Here is a 64-residue protein sequence, read N- to C-terminus: DNA gyrase inhibitor YacG (64 aa).

Residues C7, C10, C26, and C30 each contribute to the Zn(2+) site. A disordered region spans residues 44-64 (RIPGEIDPELLPYPEEGEQWQ).

Belongs to the DNA gyrase inhibitor YacG family. Interacts with GyrB. The cofactor is Zn(2+).

Its function is as follows. Inhibits all the catalytic activities of DNA gyrase by preventing its interaction with DNA. Acts by binding directly to the C-terminal domain of GyrB, which probably disrupts DNA binding by the gyrase. This chain is DNA gyrase inhibitor YacG, found in Aeromonas hydrophila subsp. hydrophila (strain ATCC 7966 / DSM 30187 / BCRC 13018 / CCUG 14551 / JCM 1027 / KCTC 2358 / NCIMB 9240 / NCTC 8049).